The following is a 40-amino-acid chain: Beta-defensin 2 (40 aa).

Cystine bridges form between C7–C36, C14–C29, and C19–C37.

This sequence belongs to the beta-defensin family. Neutrophilic granules.

It localises to the secreted. Its function is as follows. Has bactericidal activity. Active against E.coli ML35 and S.aureus 502A. The polypeptide is Beta-defensin 2 (DEFB2) (Bos taurus (Bovine)).